We begin with the raw amino-acid sequence, 280 residues long: Phosphatidylglycerol--prolipoprotein diacylglyceryl transferase (280 aa).

Transmembrane regions (helical) follow at residues 23–43 (LRWY…LAGV), 58–78 (LLFW…VLFY), 93–113 (IWTG…ALWW), and 120–140 (CTFL…LGAG). Arg-141 contributes to the a 1,2-diacyl-sn-glycero-3-phospho-(1'-sn-glycerol) binding site. 3 consecutive transmembrane segments (helical) span residues 173–193 (PSQL…LWLY), 200–220 (IGAV…FVEF), and 241–261 (QGQI…VWAV).

It belongs to the Lgt family.

It localises to the cell inner membrane. The catalysed reaction is L-cysteinyl-[prolipoprotein] + a 1,2-diacyl-sn-glycero-3-phospho-(1'-sn-glycerol) = an S-1,2-diacyl-sn-glyceryl-L-cysteinyl-[prolipoprotein] + sn-glycerol 1-phosphate + H(+). The protein operates within protein modification; lipoprotein biosynthesis (diacylglyceryl transfer). Functionally, catalyzes the transfer of the diacylglyceryl group from phosphatidylglycerol to the sulfhydryl group of the N-terminal cysteine of a prolipoprotein, the first step in the formation of mature lipoproteins. The chain is Phosphatidylglycerol--prolipoprotein diacylglyceryl transferase from Pseudoalteromonas atlantica (strain T6c / ATCC BAA-1087).